Reading from the N-terminus, the 334-residue chain is Aspartate carbamoyltransferase catalytic subunit (334 aa).

Residues Arg-71 and Thr-72 each contribute to the carbamoyl phosphate site. Lys-99 is a binding site for L-aspartate. Carbamoyl phosphate is bound by residues Arg-121, His-151, and Gln-154. L-aspartate contacts are provided by Arg-184 and Arg-239. Carbamoyl phosphate is bound by residues Gly-280 and Pro-281.

This sequence belongs to the aspartate/ornithine carbamoyltransferase superfamily. ATCase family. As to quaternary structure, heterododecamer (2C3:3R2) of six catalytic PyrB chains organized as two trimers (C3), and six regulatory PyrI chains organized as three dimers (R2).

The enzyme catalyses carbamoyl phosphate + L-aspartate = N-carbamoyl-L-aspartate + phosphate + H(+). It participates in pyrimidine metabolism; UMP biosynthesis via de novo pathway; (S)-dihydroorotate from bicarbonate: step 2/3. Its function is as follows. Catalyzes the condensation of carbamoyl phosphate and aspartate to form carbamoyl aspartate and inorganic phosphate, the committed step in the de novo pyrimidine nucleotide biosynthesis pathway. The polypeptide is Aspartate carbamoyltransferase catalytic subunit (Pseudomonas syringae pv. tomato (strain ATCC BAA-871 / DC3000)).